Here is a 236-residue protein sequence, read N- to C-terminus: Proteasome subunit alpha (236 aa).

This sequence belongs to the peptidase T1A family. As to quaternary structure, the 20S proteasome core is composed of 14 alpha and 14 beta subunits that assemble into four stacked heptameric rings, resulting in a barrel-shaped structure. The two inner rings, each composed of seven catalytic beta subunits, are sandwiched by two outer rings, each composed of seven alpha subunits. The catalytic chamber with the active sites is on the inside of the barrel. Has a gated structure, the ends of the cylinder being occluded by the N-termini of the alpha-subunits. Is capped by the proteasome-associated ATPase, ARC.

It is found in the cytoplasm. Its pathway is protein degradation; proteasomal Pup-dependent pathway. Its activity is regulated as follows. The formation of the proteasomal ATPase ARC-20S proteasome complex, likely via the docking of the C-termini of ARC into the intersubunit pockets in the alpha-rings, may trigger opening of the gate for substrate entry. Interconversion between the open-gate and close-gate conformations leads to a dynamic regulation of the 20S proteasome proteolysis activity. Functionally, component of the proteasome core, a large protease complex with broad specificity involved in protein degradation. The polypeptide is Proteasome subunit alpha (Pseudarthrobacter chlorophenolicus (strain ATCC 700700 / DSM 12829 / CIP 107037 / JCM 12360 / KCTC 9906 / NCIMB 13794 / A6) (Arthrobacter chlorophenolicus)).